The sequence spans 428 residues: D-alanine--D-alanine ligase (428 aa).

Residues 205 to 424 form the ATP-grasp domain; sequence KVVLDAAGIP…YTELITRLIE (220 aa). 237–299 lines the ATP pocket; that stretch reads DAGLTYPLFV…EQGIDGREIE (63 aa). Residues Asp-378, Glu-391, and Asn-393 each contribute to the Mg(2+) site.

The protein belongs to the D-alanine--D-alanine ligase family. It depends on Mg(2+) as a cofactor. The cofactor is Mn(2+).

The protein resides in the cytoplasm. It catalyses the reaction 2 D-alanine + ATP = D-alanyl-D-alanine + ADP + phosphate + H(+). It participates in cell wall biogenesis; peptidoglycan biosynthesis. Cell wall formation. This Bifidobacterium longum (strain NCC 2705) protein is D-alanine--D-alanine ligase.